The primary structure comprises 794 residues: Protein IQ-DOMAIN 32 (794 aa).

The tract at residues 15–101 (CSGGDDTSAD…QSFSVDEKKS (87 aa)) is disordered. Composition is skewed to polar residues over residues 23–33 (ADPNSTALENK) and 56–65 (SVVSETTPAS). A phosphoserine mark is found at S78, S80, S142, S193, and S195. The segment covering 80–95 (SPDNNNVSEKQQQSFS) has biased composition (polar residues). 2 consecutive IQ domains span residues 214-242 (DESVIVVIQAAVRGFLARRELLRSKKVIK) and 243-265 (LQAAVRGHLVRSQAMGSLRCVQA). Residues 230 to 241 (ARRELLRSKKVI) form a calmodulin-binding region. The interval 277–296 (HSTKDGSRVSATSDKSEPNA) is disordered. S369 carries the post-translational modification Phosphoserine. A disordered region spans residues 375–417 (VNSDSTVENKTETDMPSYEASKVEGQNVELSETEKMSQYDSPE). S459 is subject to Phosphoserine. Disordered stretches follow at residues 472–555 (ELTS…RVEA) and 578–794 (ATSM…KWQR). Over residues 473–486 (LTSSTGSNKAMTLS) the composition is skewed to polar residues. Basic and acidic residues predominate over residues 487–500 (SKDDVLGEEGKTDI). S502 and S544 each carry phosphoserine. 2 stretches are compositionally biased toward basic and acidic residues: residues 539–555 (TLEKKSDAEGAEPRVEA) and 585–607 (EDPKEKVENAKDEVEISATHHEP). Residues 643–654 (SQATPASQASSS) show a composition bias toward low complexity. A Nuclear localization signal motif is present at residues 657-664 (ARKGKSEK). A compositionally biased stretch (polar residues) spans 768-786 (NGKQVSPRIQRSASQAQQG).

Belongs to the IQD family. In terms of assembly, binds to multiple calmodulin (CaM) in the presence of Ca(2+) and CaM-like proteins.

The protein resides in the nucleus. The protein localises to the cytoplasm. Its subcellular location is the cytoskeleton. May be involved in cooperative interactions with calmodulins or calmodulin-like proteins. Recruits calmodulin proteins to microtubules, thus being a potential scaffold in cellular signaling and trafficking. May associate with nucleic acids and regulate gene expression at the transcriptional or post-transcriptional level. The polypeptide is Protein IQ-DOMAIN 32 (Arabidopsis thaliana (Mouse-ear cress)).